An 85-amino-acid polypeptide reads, in one-letter code: UPF0386 protein HNE_3437 (85 aa).

It belongs to the UPF0386 family.

This Hyphomonas neptunium (strain ATCC 15444) protein is UPF0386 protein HNE_3437.